The primary structure comprises 245 residues: MPYRKYREKKYEAKYREAFRAFQQKLGITFTNEKLLIQAFTHSSYVNEHRKKPHEDNERLEFLGDAVLELTVSQYLFQKYPTMSEGELTKLRAAIVCEPSLVRFANELSFGSLVLLGKGEEMTGGRERPALLADVFEAFIGALYLDQGLDTVWGFLKEIVYPKINEGAFSHVMDYKSQLQELIQRDGSGNIEYQILQEKGPAHNREFVSRVTLNSVALGLGSGKSKKEAEQQAAAEALRKLKEQS.

Residues 19 to 148 (FRAFQQKLGI…FIGALYLDQG (130 aa)) enclose the RNase III domain. Glutamate 61 provides a ligand contact to Mg(2+). Aspartate 65 is a catalytic residue. Residues aspartate 134 and glutamate 137 each coordinate Mg(2+). Residue glutamate 137 is part of the active site. The DRBM domain occupies 174–243 (DYKSQLQELI…AAEALRKLKE (70 aa)).

It belongs to the ribonuclease III family. As to quaternary structure, homodimer. Mg(2+) serves as cofactor.

Its subcellular location is the cytoplasm. The enzyme catalyses Endonucleolytic cleavage to 5'-phosphomonoester.. Functionally, digests double-stranded RNA. Involved in the processing of primary rRNA transcript to yield the immediate precursors to the large and small rRNAs (23S and 16S). Processes some mRNAs, and tRNAs when they are encoded in the rRNA operon. Processes pre-crRNA and tracrRNA of type II CRISPR loci if present in the organism. This is Ribonuclease 3 from Bacillus cytotoxicus (strain DSM 22905 / CIP 110041 / 391-98 / NVH 391-98).